A 100-amino-acid polypeptide reads, in one-letter code: Large ribosomal subunit protein uL23 (100 aa).

The protein belongs to the universal ribosomal protein uL23 family. In terms of assembly, part of the 50S ribosomal subunit. Contacts protein L29, and trigger factor when it is bound to the ribosome.

In terms of biological role, one of the early assembly proteins it binds 23S rRNA. One of the proteins that surrounds the polypeptide exit tunnel on the outside of the ribosome. Forms the main docking site for trigger factor binding to the ribosome. This chain is Large ribosomal subunit protein uL23, found in Synechococcus sp. (strain CC9311).